The following is a 348-amino-acid chain: Anthranilate phosphoribosyltransferase (348 aa).

Residues Gly91, 94–95 (GD), Thr99, 101–104 (NIST), 119–127 (KHGNRSASG), and Ser131 each bind 5-phospho-alpha-D-ribose 1-diphosphate. Anthranilate is bound at residue Gly91. Ser103 contacts Mg(2+). Residue Asn122 coordinates anthranilate. An anthranilate-binding site is contributed by Arg177. Positions 236 and 237 each coordinate Mg(2+).

The protein belongs to the anthranilate phosphoribosyltransferase family. Homodimer. Mg(2+) serves as cofactor.

The catalysed reaction is N-(5-phospho-beta-D-ribosyl)anthranilate + diphosphate = 5-phospho-alpha-D-ribose 1-diphosphate + anthranilate. Its pathway is amino-acid biosynthesis; L-tryptophan biosynthesis; L-tryptophan from chorismate: step 2/5. In terms of biological role, catalyzes the transfer of the phosphoribosyl group of 5-phosphorylribose-1-pyrophosphate (PRPP) to anthranilate to yield N-(5'-phosphoribosyl)-anthranilate (PRA). The sequence is that of Anthranilate phosphoribosyltransferase from Synechococcus sp. (strain ATCC 27144 / PCC 6301 / SAUG 1402/1) (Anacystis nidulans).